Consider the following 131-residue polypeptide: Small ribosomal subunit protein uS11 (131 aa).

The protein belongs to the universal ribosomal protein uS11 family. Part of the 30S ribosomal subunit. Interacts with proteins S7 and S18. Binds to IF-3.

Functionally, located on the platform of the 30S subunit, it bridges several disparate RNA helices of the 16S rRNA. Forms part of the Shine-Dalgarno cleft in the 70S ribosome. In Trichormus variabilis (strain ATCC 29413 / PCC 7937) (Anabaena variabilis), this protein is Small ribosomal subunit protein uS11.